The chain runs to 366 residues: Ribosomal RNA large subunit methyltransferase M (366 aa).

S-adenosyl-L-methionine contacts are provided by residues Ser188, 221–224 (CPGG), Asp240, Asp260, and Asp277. The active-site Proton acceptor is the Lys306.

It belongs to the class I-like SAM-binding methyltransferase superfamily. RNA methyltransferase RlmE family. RlmM subfamily. As to quaternary structure, monomer.

Its subcellular location is the cytoplasm. It catalyses the reaction cytidine(2498) in 23S rRNA + S-adenosyl-L-methionine = 2'-O-methylcytidine(2498) in 23S rRNA + S-adenosyl-L-homocysteine + H(+). In terms of biological role, catalyzes the 2'-O-methylation at nucleotide C2498 in 23S rRNA. The protein is Ribosomal RNA large subunit methyltransferase M of Photorhabdus sp. (strain Az29).